Reading from the N-terminus, the 184-residue chain is Photosystem I assembly protein Ycf4 (184 aa).

Transmembrane regions (helical) follow at residues 25-45 (ACIL…SYLG) and 57-77 (ILFV…LFIS).

Belongs to the Ycf4 family.

The protein localises to the plastid. Its subcellular location is the chloroplast thylakoid membrane. In terms of biological role, seems to be required for the assembly of the photosystem I complex. The protein is Photosystem I assembly protein Ycf4 of Cycas taitungensis (Prince sago).